A 326-amino-acid chain; its full sequence is Phenylserine dehydratase (326 aa).

Monomer. Pyridoxal 5'-phosphate is required as a cofactor.

It carries out the reaction L-threo-3-phenylserine = 3-phenylpyruvate + NH4(+). With respect to regulation, inhibited by phenylhydrazine, hydroxylamine, p-chloromercuribenzoate, and HgCl(2). In Ralstonia pickettii (Burkholderia pickettii), this protein is Phenylserine dehydratase.